Consider the following 284-residue polypeptide: Bifunctional protein FolD (284 aa).

Residues 166 to 168 (GAS) and isoleucine 232 each bind NADP(+).

It belongs to the tetrahydrofolate dehydrogenase/cyclohydrolase family. As to quaternary structure, homodimer.

It carries out the reaction (6R)-5,10-methylene-5,6,7,8-tetrahydrofolate + NADP(+) = (6R)-5,10-methenyltetrahydrofolate + NADPH. The enzyme catalyses (6R)-5,10-methenyltetrahydrofolate + H2O = (6R)-10-formyltetrahydrofolate + H(+). It functions in the pathway one-carbon metabolism; tetrahydrofolate interconversion. Functionally, catalyzes the oxidation of 5,10-methylenetetrahydrofolate to 5,10-methenyltetrahydrofolate and then the hydrolysis of 5,10-methenyltetrahydrofolate to 10-formyltetrahydrofolate. In Shewanella sp. (strain MR-7), this protein is Bifunctional protein FolD.